Consider the following 493-residue polypeptide: 11S globulin seed storage protein G3 (493 aa).

The N-terminal stretch at methionine 1–alanine 20 is a signal peptide. 2 cysteine pairs are disulfide-bonded: cysteine 32–cysteine 65 and cysteine 103–cysteine 312. The 212-residue stretch at isoleucine 37 to glutamine 248 folds into the Cupin type-1 1 domain. Disordered stretches follow at residues proline 190 to asparagine 229 and isoleucine 269 to asparagine 305. Low complexity-rich tracts occupy residues glutamine 191–glycine 221 and arginine 280–glycine 298. One can recognise a Cupin type-1 2 domain in the interval valine 318–glutamine 467.

Belongs to the 11S seed storage protein (globulins) family. Hexamer; each subunit is composed of an acidic and a basic chain derived from a single precursor and linked by a disulfide bond.

This is a seed storage protein. The protein is 11S globulin seed storage protein G3 (HAG3) of Helianthus annuus (Common sunflower).